The primary structure comprises 118 residues: Large ribosomal subunit protein bL20 (118 aa).

This sequence belongs to the bacterial ribosomal protein bL20 family.

In terms of biological role, binds directly to 23S ribosomal RNA and is necessary for the in vitro assembly process of the 50S ribosomal subunit. It is not involved in the protein synthesizing functions of that subunit. This chain is Large ribosomal subunit protein bL20, found in Pseudomonas entomophila (strain L48).